Here is a 455-residue protein sequence, read N- to C-terminus: Nuclear distribution protein nudF (455 aa).

In terms of domain architecture, LisH spans 9-41; sequence QAEELHKSMIAYLVASDLPDTAAALRREVNLSE. Residues 61–88 are a coiled coil; the sequence is TSIARLQKKIMDLESRNATLQSELDNST. WD repeat units follow at residues 113–154, 156–196, 200–239, 242–281, 287–347, 349–388, 392–438, and 440–455; these read SHRD…RTLK, HTRA…KNIR, GHDH…CVKT, GHTD…NIEH, GHEN…LMTL, GHDS…KCVK, AHES…IQMR, and VVAT…IFAG. Residues 408-431 are disordered; it reads KNVPGGDGAAEGEGNDKNGAGSEN.

This sequence belongs to the WD repeat LIS1/nudF family. As to quaternary structure, self-associates. Interacts with nudE and dynein.

Its subcellular location is the cytoplasm. It localises to the cytoskeleton. The protein resides in the spindle pole. Positively regulates the activity of the minus-end directed microtubule motor protein dynein. May enhance dynein-mediated microtubule sliding by targeting dynein to the microtubule plus end. Required for nuclear migration during vegetative growth as well as development. Required for retrograde early endosome (EE) transport from the hyphal tip. Required for localization of dynein to the mitotic spindle poles. Recruits additional proteins to the dynein complex at SPBs. This is Nuclear distribution protein nudF from Aspergillus flavus (strain ATCC 200026 / FGSC A1120 / IAM 13836 / NRRL 3357 / JCM 12722 / SRRC 167).